The following is a 478-amino-acid chain: Sulfate adenylyltransferase subunit 1 (478 aa).

The 217-residue stretch at 24-240 (KSLLRFLTCG…VLENVDIDAD (217 aa)) folds into the tr-type G domain. Residues 33-40 (GSVDDGKS) form a G1 region. 33-40 (GSVDDGKS) contributes to the GTP binding site. Residues 91–95 (GITID) form a G2 region. Residues 112-115 (DTPG) form a G3 region. GTP-binding positions include 112-116 (DTPGH) and 167-170 (NKMD). Residues 167 to 170 (NKMD) form a G4 region. The segment at 206-208 (SAL) is G5.

The protein belongs to the TRAFAC class translation factor GTPase superfamily. Classic translation factor GTPase family. CysN/NodQ subfamily. In terms of assembly, heterodimer composed of CysD, the smaller subunit, and CysN.

It carries out the reaction sulfate + ATP + H(+) = adenosine 5'-phosphosulfate + diphosphate. Its pathway is sulfur metabolism; hydrogen sulfide biosynthesis; sulfite from sulfate: step 1/3. With CysD forms the ATP sulfurylase (ATPS) that catalyzes the adenylation of sulfate producing adenosine 5'-phosphosulfate (APS) and diphosphate, the first enzymatic step in sulfur assimilation pathway. APS synthesis involves the formation of a high-energy phosphoric-sulfuric acid anhydride bond driven by GTP hydrolysis by CysN coupled to ATP hydrolysis by CysD. The chain is Sulfate adenylyltransferase subunit 1 from Aliivibrio fischeri (strain ATCC 700601 / ES114) (Vibrio fischeri).